The following is a 200-amino-acid chain: dTTP/UTP pyrophosphatase (200 aa).

D81 (proton acceptor) is an active-site residue.

It belongs to the Maf family. YhdE subfamily. It depends on a divalent metal cation as a cofactor.

It is found in the cytoplasm. The enzyme catalyses dTTP + H2O = dTMP + diphosphate + H(+). It carries out the reaction UTP + H2O = UMP + diphosphate + H(+). Nucleoside triphosphate pyrophosphatase that hydrolyzes dTTP and UTP. May have a dual role in cell division arrest and in preventing the incorporation of modified nucleotides into cellular nucleic acids. This chain is dTTP/UTP pyrophosphatase, found in Cupriavidus metallidurans (strain ATCC 43123 / DSM 2839 / NBRC 102507 / CH34) (Ralstonia metallidurans).